A 374-amino-acid chain; its full sequence is Type IV secretion system protein PtlG homolog (374 aa).

A helical transmembrane segment spans residues 38-56 (WMFALVAVALSCLLATGIW). The disordered stretch occupies residues 86-117 (HPREPEPAPLPDMPAAPDPILPQPRPAPPVPP). The span at 92–117 (PAPLPDMPAAPDPILPQPRPAPPVPP) shows a compositional bias: pro residues.

It belongs to the TrbI/VirB10 family.

It localises to the cell membrane. This is Type IV secretion system protein PtlG homolog (ptlG) from Bordetella bronchiseptica (strain ATCC BAA-588 / NCTC 13252 / RB50) (Alcaligenes bronchisepticus).